The following is a 510-amino-acid chain: MTEPNTPAAPTGQAQDDNQIMAERREKLAALRQQGVAYPNDFCPTHHAADLHTRYSETDQPALEAANVEVALAGRMMLKRVMGKASFATVQDGSGQIQFYITRDRVGEDVYAAFKHWDLGDIVAARGVLFRTNKGELSVQVQELRLLSKSLRPLPDKFHGLADQEMKYRQRYVDLIVSPETRNTFRARTKAIASLRHHMSDAGFMEVETPMLHPIPGGAAAKPFITHHNALDMQMFLRIAPELYLKRLIVGGFERVYEINRNFRNEGVSPRHNPEFTMMEFYAAYTDYRWLMDYTENLIRQAAIDATGSAALNYQGRELDLSKPFHRLTICQAIQKYAPQYTDAQLADANFLRAELKKFKIDTNAPQFLNAGVGTLQLVLFEETAESQLWEPTFIVDYPVEVSPLARGSDTLPGITERFELFITGREIANGFSELNDPEDQAERFRKQVEQKDAGDEEAMFYDADYIRALEYGMPPTGGCGIGIDRLVMLLTDSPNIRDVILFPHLRRED.

E420 and E427 together coordinate Mg(2+).

Belongs to the class-II aminoacyl-tRNA synthetase family. As to quaternary structure, homodimer. Mg(2+) serves as cofactor.

Its subcellular location is the cytoplasm. It carries out the reaction tRNA(Lys) + L-lysine + ATP = L-lysyl-tRNA(Lys) + AMP + diphosphate. This is Lysine--tRNA ligase from Ralstonia nicotianae (strain ATCC BAA-1114 / GMI1000) (Ralstonia solanacearum).